Reading from the N-terminus, the 102-residue chain is Chorion protein S15 (102 aa).

The signal sequence occupies residues 1–18 (MKFLIAFVAIAFFACVSA).

It belongs to the chorion protein S15/S18 family.

It is found in the secreted. In terms of biological role, chorion membrane (egg shell) protein; plays a role in protecting the egg from the environment. This is Chorion protein S15 (Cp15) from Drosophila grimshawi (Hawaiian fruit fly).